The primary structure comprises 363 residues: MPRKIRVLIVDDSASVRQTMTEILESDPGIEVIGTAPDPYVAARRIQQEVPDVITLDVEMPRMDGITFLRKIMAQRPIPVVVCSSLTETDSETASQAWEAGAVEIILKPRVGTAQFLLESKIHICDVVKAAAGARLRSMPAAGRANRPRVPEKKLTADAVLPPPVAGRNAMARTTESVICIGASTGGTESLREVLEALPAASPAIVIVQHMPEKFTEAFARRLDSLCDMEVKEAVDGDTVMRGRVLIAPGNHHMLLQRSGARYYVSVKDGPLVSRHRPSVDVLFRSAASHAGSNAVGIIMTGMGDDGARGLLEMRKAGAYTIAQDEATSVVFGMPKEAIALGAADKILPLEMLAMEILRAGNR.

The Response regulatory domain occupies 6–123; that stretch reads RVLIVDDSAS…AQFLLESKIH (118 aa). At Asp57 the chain carries 4-aspartylphosphate. Residues 172–363 enclose the CheB-type methylesterase domain; the sequence is ARTTESVICI…AMEILRAGNR (192 aa). Catalysis depends on residues Ser184, His210, and Asp306.

It belongs to the CheB family. Phosphorylated by CheA. Phosphorylation of the N-terminal regulatory domain activates the methylesterase activity.

The protein resides in the cytoplasm. It catalyses the reaction [protein]-L-glutamate 5-O-methyl ester + H2O = L-glutamyl-[protein] + methanol + H(+). The enzyme catalyses L-glutaminyl-[protein] + H2O = L-glutamyl-[protein] + NH4(+). In terms of biological role, involved in chemotaxis. Part of a chemotaxis signal transduction system that modulates chemotaxis in response to various stimuli. Catalyzes the demethylation of specific methylglutamate residues introduced into the chemoreceptors (methyl-accepting chemotaxis proteins or MCP) by CheR. Also mediates the irreversible deamidation of specific glutamine residues to glutamic acid. The protein is Protein-glutamate methylesterase/protein-glutamine glutaminase 2 of Rhodospirillum rubrum (strain ATCC 11170 / ATH 1.1.1 / DSM 467 / LMG 4362 / NCIMB 8255 / S1).